The primary structure comprises 403 residues: Probable protein phosphatase 2C 8 (403 aa).

Residues 42–80 are disordered; sequence LGRTASAVAEDDAAKRVRPASDSSSDSSESAKVAPEPTA. Residues 62-71 are compositionally biased toward low complexity; sequence SDSSSDSSES. One can recognise a PPM-type phosphatase domain in the interval 90 to 388; that stretch reads SHGAVSVIGR…DNISVVVVEL (299 aa). Positions 144, 145, 325, and 379 each coordinate Mn(2+).

Belongs to the PP2C family. The cofactor is Mg(2+). It depends on Mn(2+) as a cofactor.

The enzyme catalyses O-phospho-L-seryl-[protein] + H2O = L-seryl-[protein] + phosphate. It carries out the reaction O-phospho-L-threonyl-[protein] + H2O = L-threonyl-[protein] + phosphate. The chain is Probable protein phosphatase 2C 8 from Oryza sativa subsp. japonica (Rice).